Consider the following 350-residue polypeptide: Ferrochelatase (350 aa).

2 residues coordinate Fe cation: histidine 220 and glutamate 301.

This sequence belongs to the ferrochelatase family.

It localises to the cytoplasm. It carries out the reaction heme b + 2 H(+) = protoporphyrin IX + Fe(2+). It participates in porphyrin-containing compound metabolism; protoheme biosynthesis; protoheme from protoporphyrin-IX: step 1/1. Its function is as follows. Catalyzes the ferrous insertion into protoporphyrin IX. This Brucella anthropi (strain ATCC 49188 / DSM 6882 / CCUG 24695 / JCM 21032 / LMG 3331 / NBRC 15819 / NCTC 12168 / Alc 37) (Ochrobactrum anthropi) protein is Ferrochelatase.